A 527-amino-acid polypeptide reads, in one-letter code: Amine oxidase [flavin-containing] A (527 aa).

Position 1 is an N-acetylmethionine (methionine 1). Residues 1–497 (MESLQKTSDA…PSFWERNLPS (497 aa)) are Cytoplasmic-facing. Serine 383 carries the phosphoserine modification. Cysteine 406 is subject to S-8alpha-FAD cysteine. A helical; Anchor for type IV membrane protein membrane pass occupies residues 498–518 (VSGLLKIVGFSTSITALWFVM). At 519–527 (YRFRLLSRS) the chain is on the mitochondrial intermembrane side. The interval 520-522 (RFR) is interaction with membrane phospholipid headgroups.

Belongs to the flavin monoamine oxidase family. Monomer, homo- or heterodimer (containing two subunits of similar size). Each subunit contains a covalently bound flavin. Enzymatically active as monomer. It depends on FAD as a cofactor.

Its subcellular location is the mitochondrion outer membrane. It carries out the reaction a secondary aliphatic amine + O2 + H2O = a primary amine + an aldehyde + H2O2. The catalysed reaction is a primary methyl amine + O2 + H2O = an aldehyde + H2O2 + NH4(+). It catalyses the reaction (R)-adrenaline + O2 + H2O = (R)-3,4-dihydroxymandelaldehyde + methylamine + H2O2. The enzyme catalyses dopamine + O2 + H2O = 3,4-dihydroxyphenylacetaldehyde + H2O2 + NH4(+). It carries out the reaction tyramine + O2 + H2O = (4-hydroxyphenyl)acetaldehyde + H2O2 + NH4(+). The catalysed reaction is (R)-noradrenaline + O2 + H2O = (R)-3,4-dihydroxymandelaldehyde + H2O2 + NH4(+). It catalyses the reaction serotonin + O2 + H2O = (5-hydroxyindol-3-yl)acetaldehyde + H2O2 + NH4(+). The enzyme catalyses kynuramine + O2 + H2O = 3-(2-aminophenyl)-3-oxopropanal + H2O2 + NH4(+). It carries out the reaction tryptamine + O2 + H2O = indole-3-acetaldehyde + H2O2 + NH4(+). The catalysed reaction is 2-phenylethylamine + O2 + H2O = 2-phenylacetaldehyde + H2O2 + NH4(+). In terms of biological role, catalyzes the oxidative deamination of primary and some secondary amine such as neurotransmitters, with concomitant reduction of oxygen to hydrogen peroxide and has important functions in the metabolism of neuroactive and vasoactive amines in the central nervous system and peripheral tissues. Preferentially oxidizes serotonin. Also catalyzes the oxidative deamination of kynuramine to 3-(2-aminophenyl)-3-oxopropanal that can spontaneously condense to 4-hydroxyquinoline. This Bos taurus (Bovine) protein is Amine oxidase [flavin-containing] A.